A 131-amino-acid chain; its full sequence is Fumarate reductase subunit C (131 aa).

The next 2 helical transmembrane spans lie at F60–A80 and I110–F130.

Belongs to the FrdC family. As to quaternary structure, part of an enzyme complex containing four subunits: a flavoprotein (FrdA), an iron-sulfur protein (FrdB), and two hydrophobic anchor proteins (FrdC and FrdD).

The protein resides in the cell inner membrane. In terms of biological role, two distinct, membrane-bound, FAD-containing enzymes are responsible for the catalysis of fumarate and succinate interconversion; fumarate reductase is used in anaerobic growth, and succinate dehydrogenase is used in aerobic growth. Anchors the catalytic components of the fumarate reductase complex to the cell inner membrane, binds quinones. The protein is Fumarate reductase subunit C of Enterobacter sp. (strain 638).